The following is a 423-amino-acid chain: Gamma-glutamyl phosphate reductase (423 aa).

It belongs to the gamma-glutamyl phosphate reductase family.

It localises to the cytoplasm. The enzyme catalyses L-glutamate 5-semialdehyde + phosphate + NADP(+) = L-glutamyl 5-phosphate + NADPH + H(+). It participates in amino-acid biosynthesis; L-proline biosynthesis; L-glutamate 5-semialdehyde from L-glutamate: step 2/2. Its function is as follows. Catalyzes the NADPH-dependent reduction of L-glutamate 5-phosphate into L-glutamate 5-semialdehyde and phosphate. The product spontaneously undergoes cyclization to form 1-pyrroline-5-carboxylate. This Burkholderia orbicola (strain AU 1054) protein is Gamma-glutamyl phosphate reductase.